The sequence spans 27 residues: Protein YkiD (27 aa).

This Escherichia coli (strain K12) protein is Protein YkiD.